A 159-amino-acid chain; its full sequence is 2-C-methyl-D-erythritol 2,4-cyclodiphosphate synthase (159 aa).

A divalent metal cation-binding residues include aspartate 10 and histidine 12. 4-CDP-2-C-methyl-D-erythritol 2-phosphate contacts are provided by residues 10–12 (DVH) and 36–37 (HS). Residue histidine 44 coordinates a divalent metal cation. 4-CDP-2-C-methyl-D-erythritol 2-phosphate is bound by residues 58–60 (DIG), 63–67 (FANTD), 134–137 (TTNE), and arginine 144.

Belongs to the IspF family. As to quaternary structure, homotrimer. It depends on a divalent metal cation as a cofactor.

The catalysed reaction is 4-CDP-2-C-methyl-D-erythritol 2-phosphate = 2-C-methyl-D-erythritol 2,4-cyclic diphosphate + CMP. It functions in the pathway isoprenoid biosynthesis; isopentenyl diphosphate biosynthesis via DXP pathway; isopentenyl diphosphate from 1-deoxy-D-xylulose 5-phosphate: step 4/6. Its function is as follows. Involved in the biosynthesis of isopentenyl diphosphate (IPP) and dimethylallyl diphosphate (DMAPP), two major building blocks of isoprenoid compounds. Catalyzes the conversion of 4-diphosphocytidyl-2-C-methyl-D-erythritol 2-phosphate (CDP-ME2P) to 2-C-methyl-D-erythritol 2,4-cyclodiphosphate (ME-CPP) with a corresponding release of cytidine 5-monophosphate (CMP). This is 2-C-methyl-D-erythritol 2,4-cyclodiphosphate synthase from Cytophaga hutchinsonii (strain ATCC 33406 / DSM 1761 / CIP 103989 / NBRC 15051 / NCIMB 9469 / D465).